The primary structure comprises 714 residues: Fatty acid oxidation complex subunit alpha (714 aa).

Residues 1 to 190 form an enoyl-CoA hydratase region; sequence MEMASAFTLN…KLGLVDDVVP (190 aa). Residues 306-714 form a 3-hydroxyacyl-CoA dehydrogenase region; it reads APLNSVGILG…FWKTTATDLQ (409 aa).

In the N-terminal section; belongs to the enoyl-CoA hydratase/isomerase family. This sequence in the central section; belongs to the 3-hydroxyacyl-CoA dehydrogenase family. As to quaternary structure, heterotetramer of two alpha chains (FadJ) and two beta chains (FadI).

Its subcellular location is the cytoplasm. The catalysed reaction is a (3S)-3-hydroxyacyl-CoA = a (2E)-enoyl-CoA + H2O. It catalyses the reaction a 4-saturated-(3S)-3-hydroxyacyl-CoA = a (3E)-enoyl-CoA + H2O. The enzyme catalyses a (3S)-3-hydroxyacyl-CoA + NAD(+) = a 3-oxoacyl-CoA + NADH + H(+). It carries out the reaction (3S)-3-hydroxybutanoyl-CoA = (3R)-3-hydroxybutanoyl-CoA. It participates in lipid metabolism; fatty acid beta-oxidation. In terms of biological role, catalyzes the formation of a hydroxyacyl-CoA by addition of water on enoyl-CoA. Also exhibits 3-hydroxyacyl-CoA epimerase and 3-hydroxyacyl-CoA dehydrogenase activities. The chain is Fatty acid oxidation complex subunit alpha from Escherichia coli (strain ATCC 8739 / DSM 1576 / NBRC 3972 / NCIMB 8545 / WDCM 00012 / Crooks).